A 36-amino-acid polypeptide reads, in one-letter code: uncharacterized protein (36 aa).

This is an uncharacterized protein from Haemophilus influenzae (strain ATCC 51907 / DSM 11121 / KW20 / Rd).